The sequence spans 274 residues: Mitochondrial S-adenosylmethionine carrier protein (274 aa).

Solcar repeat units lie at residues 4–77 (PGFT…VKSL), 86–168 (FKPV…LKAL), and 177–265 (VDSW…ARSL). The next 6 membrane-spanning stretches (helical) occupy residues 5–25 (GFTASLVAGGVAGVSVDLILF), 49–69 (IYAGVPSAAVGSFPNAAAFFL), 85–105 (HFKPVKHMLAASTGEVVACLI), 142–162 (RGYKSTVLREIPFSLVQFPLW), 182–202 (SAVCGAFAGGFAAAVTTPLDV), and 238–258 (FAGVLPRMAAISMGGFIFLGA).

The protein belongs to the mitochondrial carrier (TC 2.A.29) family.

The protein localises to the mitochondrion inner membrane. It carries out the reaction S-adenosyl-L-homocysteine(out) + S-adenosyl-L-methionine(in) = S-adenosyl-L-homocysteine(in) + S-adenosyl-L-methionine(out). Mitochondrial S-adenosyl-L-methionine/S-adenosyl-L-homocysteine antiporter. Mediates the exchange of cytosolic S-adenosyl-L-methionine, the predominant methyl-group donor for macromolecule methylation processes, for mitochondrial S-adenosylhomocysteine(SAH), a by-product of methylation reactions. In Mus musculus (Mouse), this protein is Mitochondrial S-adenosylmethionine carrier protein.